The sequence spans 431 residues: Enolase (431 aa).

Glutamine 166 provides a ligand contact to (2R)-2-phosphoglycerate. The active-site Proton donor is glutamate 208. Mg(2+) is bound by residues aspartate 245, glutamate 288, and aspartate 315. Residues lysine 340, arginine 369, serine 370, and lysine 391 each contribute to the (2R)-2-phosphoglycerate site. Catalysis depends on lysine 340, which acts as the Proton acceptor.

It belongs to the enolase family. Mg(2+) serves as cofactor.

The protein localises to the cytoplasm. It is found in the secreted. Its subcellular location is the cell surface. The enzyme catalyses (2R)-2-phosphoglycerate = phosphoenolpyruvate + H2O. The protein operates within carbohydrate degradation; glycolysis; pyruvate from D-glyceraldehyde 3-phosphate: step 4/5. In terms of biological role, catalyzes the reversible conversion of 2-phosphoglycerate (2-PG) into phosphoenolpyruvate (PEP). It is essential for the degradation of carbohydrates via glycolysis. This chain is Enolase, found in Clostridium tetani (strain Massachusetts / E88).